A 161-amino-acid polypeptide reads, in one-letter code: SsrA-binding protein (161 aa).

Positions 139–153 (RESIKRKEENRELDR) are enriched in basic and acidic residues. The segment at 139 to 161 (RESIKRKEENRELDRLRKRRRQE) is disordered.

The protein belongs to the SmpB family.

The protein localises to the cytoplasm. Functionally, required for rescue of stalled ribosomes mediated by trans-translation. Binds to transfer-messenger RNA (tmRNA), required for stable association of tmRNA with ribosomes. tmRNA and SmpB together mimic tRNA shape, replacing the anticodon stem-loop with SmpB. tmRNA is encoded by the ssrA gene; the 2 termini fold to resemble tRNA(Ala) and it encodes a 'tag peptide', a short internal open reading frame. During trans-translation Ala-aminoacylated tmRNA acts like a tRNA, entering the A-site of stalled ribosomes, displacing the stalled mRNA. The ribosome then switches to translate the ORF on the tmRNA; the nascent peptide is terminated with the 'tag peptide' encoded by the tmRNA and targeted for degradation. The ribosome is freed to recommence translation, which seems to be the essential function of trans-translation. The protein is SsrA-binding protein of Syntrophobacter fumaroxidans (strain DSM 10017 / MPOB).